Here is a 449-residue protein sequence, read N- to C-terminus: Putative glycosyltransferase 7 (449 aa).

The Cytoplasmic segment spans residues 1-32 (MVSPETSSSHYQSSPMAKYAGTRTRPVVCISD). Residues 33–53 (VVLFLGGAFMSLILVWSFFSF) traverse the membrane as a helical; Signal-anchor for type II membrane protein segment. Residues 54-449 (SSISPNLTVK…VPFDYPDEPW (396 aa)) lie on the Lumenal side of the membrane. 3 N-linked (GlcNAc...) asparagine glycosylation sites follow: N59, N123, and N332.

It belongs to the glycosyltransferase 34 family.

The protein resides in the golgi apparatus membrane. Functionally, probable glycosyltransferase that may be involved in the biosynthesis of xyloglucan. This Arabidopsis thaliana (Mouse-ear cress) protein is Putative glycosyltransferase 7 (GT7).